The following is a 275-amino-acid chain: Ribosomal RNA small subunit methyltransferase A (275 aa).

Residues asparagine 15, leucine 17, glycine 42, glutamate 63, aspartate 88, and asparagine 111 each contribute to the S-adenosyl-L-methionine site.

The protein belongs to the class I-like SAM-binding methyltransferase superfamily. rRNA adenine N(6)-methyltransferase family. RsmA subfamily.

Its subcellular location is the cytoplasm. It carries out the reaction adenosine(1518)/adenosine(1519) in 16S rRNA + 4 S-adenosyl-L-methionine = N(6)-dimethyladenosine(1518)/N(6)-dimethyladenosine(1519) in 16S rRNA + 4 S-adenosyl-L-homocysteine + 4 H(+). Functionally, specifically dimethylates two adjacent adenosines (A1518 and A1519) in the loop of a conserved hairpin near the 3'-end of 16S rRNA in the 30S particle. May play a critical role in biogenesis of 30S subunits. The chain is Ribosomal RNA small subunit methyltransferase A from Geobacter metallireducens (strain ATCC 53774 / DSM 7210 / GS-15).